The following is a 1068-amino-acid chain: Carbamoyl phosphate synthase large chain (1068 aa).

The segment at 1-401 (MPLNKDIKKV…AFLKGTRSLE (401 aa)) is carboxyphosphate synthetic domain. Residues R129, R169, G175, G176, K208, V210, E215, G241, I242, H243, Q284, and E298 each contribute to the ATP site. The ATP-grasp 1 domain maps to 133 to 327 (RNVMSRINEP…IAKVASKIAL (195 aa)). The Mg(2+) site is built by Q284, E298, and N300. The Mn(2+) site is built by Q284, E298, and N300. An oligomerization domain region spans residues 402–549 (IGKYSLEHKK…YSTYDVYDEV (148 aa)). A carbamoyl phosphate synthetic domain region spans residues 550–932 (EVSKNKKVIV…ALYKGFIGAN (383 aa)). An ATP-grasp 2 domain is found at 674-864 (DELLEKLKIA…IVDIATRVML (191 aa)). R710, K749, L751, E755, G780, V781, H782, S783, Q823, and E835 together coordinate ATP. Mg(2+) is bound by residues Q823, E835, and N837. The Mn(2+) site is built by Q823, E835, and N837. The MGS-like domain maps to 933–1068 (ISIKKEKGTV…ETLYIFDLSN (136 aa)). An allosteric domain region spans residues 933-1068 (ISIKKEKGTV…ETLYIFDLSN (136 aa)).

The protein belongs to the CarB family. Composed of two chains; the small (or glutamine) chain promotes the hydrolysis of glutamine to ammonia, which is used by the large (or ammonia) chain to synthesize carbamoyl phosphate. Tetramer of heterodimers (alpha,beta)4. Mg(2+) is required as a cofactor. Mn(2+) serves as cofactor.

It carries out the reaction hydrogencarbonate + L-glutamine + 2 ATP + H2O = carbamoyl phosphate + L-glutamate + 2 ADP + phosphate + 2 H(+). It catalyses the reaction hydrogencarbonate + NH4(+) + 2 ATP = carbamoyl phosphate + 2 ADP + phosphate + 2 H(+). Its pathway is amino-acid biosynthesis; L-arginine biosynthesis; carbamoyl phosphate from bicarbonate: step 1/1. It participates in pyrimidine metabolism; UMP biosynthesis via de novo pathway; (S)-dihydroorotate from bicarbonate: step 1/3. Its function is as follows. Large subunit of the glutamine-dependent carbamoyl phosphate synthetase (CPSase). CPSase catalyzes the formation of carbamoyl phosphate from the ammonia moiety of glutamine, carbonate, and phosphate donated by ATP, constituting the first step of 2 biosynthetic pathways, one leading to arginine and/or urea and the other to pyrimidine nucleotides. The large subunit (synthetase) binds the substrates ammonia (free or transferred from glutamine from the small subunit), hydrogencarbonate and ATP and carries out an ATP-coupled ligase reaction, activating hydrogencarbonate by forming carboxy phosphate which reacts with ammonia to form carbamoyl phosphate. The chain is Carbamoyl phosphate synthase large chain from Clostridium botulinum (strain Langeland / NCTC 10281 / Type F).